The following is a 602-amino-acid chain: DEAD-box ATP-dependent RNA helicase 52A (602 aa).

The interval 9 to 31 (KSVEAGGEPGGGGGGAWSTVSRS) is disordered. The span at 15–24 (GEPGGGGGGA) shows a compositional bias: gly residues. The Q motif signature appears at 84–112 (DGFEAAGLVEAVLRNVARCGYESPTPVQR). The region spanning 115-305 (MPIALAGRDL…SDFLSNYIFI (191 aa)) is the Helicase ATP-binding domain. 128–135 (AQTGSGKT) contributes to the ATP binding site. A DEAD box motif is present at residues 249-252 (DEAD). One can recognise a Helicase C-terminal domain in the interval 328 to 485 (EKRGYLLDLL…DVPDWLVQYA (158 aa)). Disordered stretches follow at residues 492 to 521 (GSSYGGRNRRSGGGGNRFAGRDFRQGSGGG) and 552 to 602 (RGGG…SGWD). The span at 552–574 (RGGGYSRGGRGGYSGGGGGGGGD) shows a compositional bias: gly residues.

This sequence belongs to the DEAD box helicase family. DDX3/DED1 subfamily.

It carries out the reaction ATP + H2O = ADP + phosphate + H(+). In Oryza sativa subsp. japonica (Rice), this protein is DEAD-box ATP-dependent RNA helicase 52A.